The chain runs to 245 residues: 4-hydroxy-tetrahydrodipicolinate reductase (245 aa).

NAD(+)-binding positions include glycine 7–valine 12, glycine 75–threonine 77, and alanine 102–phenylalanine 105. Histidine 132 serves as the catalytic Proton donor/acceptor. Histidine 133 provides a ligand contact to (S)-2,3,4,5-tetrahydrodipicolinate. Lysine 136 serves as the catalytic Proton donor. Glycine 142–threonine 143 provides a ligand contact to (S)-2,3,4,5-tetrahydrodipicolinate.

Belongs to the DapB family.

It localises to the cytoplasm. It catalyses the reaction (S)-2,3,4,5-tetrahydrodipicolinate + NAD(+) + H2O = (2S,4S)-4-hydroxy-2,3,4,5-tetrahydrodipicolinate + NADH + H(+). It carries out the reaction (S)-2,3,4,5-tetrahydrodipicolinate + NADP(+) + H2O = (2S,4S)-4-hydroxy-2,3,4,5-tetrahydrodipicolinate + NADPH + H(+). It functions in the pathway amino-acid biosynthesis; L-lysine biosynthesis via DAP pathway; (S)-tetrahydrodipicolinate from L-aspartate: step 4/4. Catalyzes the conversion of 4-hydroxy-tetrahydrodipicolinate (HTPA) to tetrahydrodipicolinate. In Mycobacterium sp. (strain JLS), this protein is 4-hydroxy-tetrahydrodipicolinate reductase.